Reading from the N-terminus, the 492-residue chain is KAT8 regulatory NSL complex subunit 2 (492 aa).

A Glycyl lysine isopeptide (Lys-Gly) (interchain with G-Cter in SUMO2) cross-link involves residue Lys-78. A disordered region spans residues 126–182 (ELGSQTPESSRSEASRILDEDSWSDGEQEPITVDQTWRGDPDSEADSIDRDQEDPLK). Thr-131 is subject to Phosphothreonine. Residues 135 to 144 (SRSEASRILD) are compositionally biased toward basic and acidic residues. Residues Ser-147, Ser-149, Ser-168, and Ser-172 each carry the phosphoserine modification. A compositionally biased stretch (basic and acidic residues) spans 162 to 182 (WRGDPDSEADSIDRDQEDPLK). The segment at 308-364 (DVRCSNQSLPMTRHCLTHICQDTNRVLFKCCQGSEEVPCNKPVPVSLSEDPCCPLHF) is required for interaction with other NSL complex members. The disordered stretch occupies residues 453-492 (QMAGDGCRSQGPRNSEKAPAPLSQSGIATANGKPEPTSVS).

In terms of assembly, component of the NSL complex at least composed of KAT8/MOF, KANSL1, KANSL2, KANSL3, MCRS1, PHF20, OGT1/OGT, WDR5 and HCFC1. Ubiquitously expressed.

The protein resides in the nucleus. It localises to the mitochondrion. Its function is as follows. Non-catalytic component of the NSL histone acetyltransferase complex, a multiprotein complex that mediates histone H4 acetylation at 'Lys-5'- and 'Lys-8' (H4K5ac and H4K8ac) at transcription start sites and promotes transcription initiation. Required for NSL complex stability and for transcription of intraciliary transport genes in both ciliated and non-ciliated cells by regulating histone H4 acetylation at 'Lys-5'- and 'Lys-12' (H4K5ac and H4K12ac). This is necessary for cilium assembly in ciliated cells and for organization of the microtubule cytoskeleton in non-ciliated cells. Required within the NSL complex to maintain nuclear architecture stability by promoting KAT8-mediated acetylation of lamin LMNA. The sequence is that of KAT8 regulatory NSL complex subunit 2 (KANSL2) from Capra hircus (Goat).